The following is a 219-amino-acid chain: 7-cyano-7-deazaguanine synthase (219 aa).

8 to 18 (LSGGMDSAVLL) serves as a coordination point for ATP. C185, C193, C196, and C199 together coordinate Zn(2+).

It belongs to the QueC family. It depends on Zn(2+) as a cofactor.

The enzyme catalyses 7-carboxy-7-deazaguanine + NH4(+) + ATP = 7-cyano-7-deazaguanine + ADP + phosphate + H2O + H(+). The protein operates within purine metabolism; 7-cyano-7-deazaguanine biosynthesis. In terms of biological role, catalyzes the ATP-dependent conversion of 7-carboxy-7-deazaguanine (CDG) to 7-cyano-7-deazaguanine (preQ(0)). This is 7-cyano-7-deazaguanine synthase from Desulfotalea psychrophila (strain LSv54 / DSM 12343).